The primary structure comprises 236 residues: tRNA1(Val) (adenine(37)-N6)-methyltransferase (236 aa).

This sequence belongs to the methyltransferase superfamily. tRNA (adenine-N(6)-)-methyltransferase family.

The protein resides in the cytoplasm. It carries out the reaction adenosine(37) in tRNA1(Val) + S-adenosyl-L-methionine = N(6)-methyladenosine(37) in tRNA1(Val) + S-adenosyl-L-homocysteine + H(+). Functionally, specifically methylates the adenine in position 37 of tRNA(1)(Val) (anticodon cmo5UAC). The chain is tRNA1(Val) (adenine(37)-N6)-methyltransferase from Shewanella sp. (strain MR-4).